A 59-amino-acid chain; its full sequence is Large ribosomal subunit protein uL30 (59 aa).

It belongs to the universal ribosomal protein uL30 family. Part of the 50S ribosomal subunit.

This chain is Large ribosomal subunit protein uL30, found in Histophilus somni (strain 129Pt) (Haemophilus somnus).